Here is a 179-residue protein sequence, read N- to C-terminus: MSRIGLKPIEVPQGVEITVDEKNIVTVKGPNGQLSEKIHRDITVETEANVINVVRPTENKKHKSLHGLSRTLVANMVEGVTKGYEKKLELVGVGYRATMQGKKLVLSLGFSHPVEIDQPEGLTIEVPSQTQVTVKGIDKQQVGNFAAKIREYRKPEPYKGKGVRYAGEVVRRKEGKTGK.

This sequence belongs to the universal ribosomal protein uL6 family. As to quaternary structure, part of the 50S ribosomal subunit.

This protein binds to the 23S rRNA, and is important in its secondary structure. It is located near the subunit interface in the base of the L7/L12 stalk, and near the tRNA binding site of the peptidyltransferase center. The polypeptide is Large ribosomal subunit protein uL6 (Alkaliphilus metalliredigens (strain QYMF)).